Consider the following 111-residue polypeptide: Probable 4-amino-4-deoxy-L-arabinose-phosphoundecaprenol flippase subunit ArnE (111 aa).

The next 3 helical transmembrane spans lie at 36–56, 61–81, and 88–108; these read IVLW…LWLL, VPVG…TLAA, and PVSP…VILG. Positions 40–109 constitute an EamA domain; sequence LGLALACLGL…IIGGIVILGS (70 aa).

It belongs to the ArnE family. In terms of assembly, heterodimer of ArnE and ArnF.

The protein resides in the cell inner membrane. It functions in the pathway bacterial outer membrane biogenesis; lipopolysaccharide biosynthesis. Functionally, translocates 4-amino-4-deoxy-L-arabinose-phosphoundecaprenol (alpha-L-Ara4N-phosphoundecaprenol) from the cytoplasmic to the periplasmic side of the inner membrane. This Shigella flexneri protein is Probable 4-amino-4-deoxy-L-arabinose-phosphoundecaprenol flippase subunit ArnE.